The following is a 293-amino-acid chain: MARAIWKGAISFGLVHIPVSLSAATSSQGIDFDWLDQRSMEPVGYKRVNKVTGKEIERENIVKGVEYEKGRYVVLSEEEIRAAHPKSTQTIEIFAFVDSQEIPLQHFDTPYYLVPDRRGGKVYALLRETLERTGKVALANVVLHTRQHLALLRPLQDALVLITLRWPSQVRSLDGLELDESVTEAKLDKRELEMAKRLVEDMASHWEPDEYKDSFSDKIMKLVEEKAAKGQLHAVEEEEEVAGKGADIIDLTDLLKRSLRSRAGGGKDKGSEKAGADAKGRAKSGASRSRRKA.

Residues 10–195 form the Ku domain; it reads ISFGLVHIPV…KLDKRELEMA (186 aa). The required for dimerization stretch occupies residues 216–229; the sequence is SDKIMKLVEEKAAK. A disordered region spans residues 260-293; the sequence is RSRAGGGKDKGSEKAGADAKGRAKSGASRSRRKA. The span at 265 to 280 shows a compositional bias: basic and acidic residues; that stretch reads GGKDKGSEKAGADAKG.

The protein belongs to the prokaryotic Ku family. Homodimer, may form higher-order multimers on DNA. Non-dimerized protein does not stimulate LigD ligase activity. Probably interacts with LigD.

Functionally, with LigD forms a non-homologous end joining (NHEJ) DNA repair enzyme, which repairs dsDNA breaks with reduced fidelity. Stimulates rNTP addition to DSB and end joining (ligation) of linear DNA by LigD, on 3'-overhangs and probably also 5'-overhangs and blunt dsDNA breaks. Binds both ends of linear dsDNA protecting it from exonuclease activity. This Pseudomonas aeruginosa (strain ATCC 15692 / DSM 22644 / CIP 104116 / JCM 14847 / LMG 12228 / 1C / PRS 101 / PAO1) protein is Non-homologous end joining protein Ku.